The chain runs to 247 residues: Caffeoyl-CoA O-methyltransferase (247 aa).

Lys21 contributes to the substrate binding site. Residues Thr63, Glu85, 87–88 (GV), Ser93, Asp111, and Ala140 contribute to the S-adenosyl-L-methionine site. Residue Asp163 participates in substrate binding. Asp163 contributes to the a divalent metal cation binding site. Asp165 contacts S-adenosyl-L-methionine. A divalent metal cation-binding residues include Asp189 and Asn190. Asn194 provides a ligand contact to substrate.

It belongs to the class I-like SAM-binding methyltransferase superfamily. Cation-dependent O-methyltransferase family. CCoAMT subfamily. It depends on a divalent metal cation as a cofactor.

The catalysed reaction is (E)-caffeoyl-CoA + S-adenosyl-L-methionine = (E)-feruloyl-CoA + S-adenosyl-L-homocysteine + H(+). It functions in the pathway aromatic compound metabolism; phenylpropanoid biosynthesis. Functionally, methylates caffeoyl-CoA to feruloyl-CoA and 5-hydroxyferuloyl-CoA to sinapoyl-CoA. Plays a role in the synthesis of feruloylated polysaccharides. Involved in the reinforcement of the plant cell wall. Also involved in the responding to wounding or pathogen challenge by the increased formation of cell wall-bound ferulic acid polymers. This is Caffeoyl-CoA O-methyltransferase from Populus tremuloides (Quaking aspen).